A 750-amino-acid chain; its full sequence is Photosystem I P700 chlorophyll a apoprotein A1 (750 aa).

8 helical membrane passes run 70 to 93 (VFSAHFGQLSIIFLWLSGMYFHGA), 156 to 179 (LYCTAIGALVFAALMLFAGWFHYH), 195 to 219 (LNHHLAGLLGLGSLSWAGHQVHVSL), 291 to 309 (IAHHHLAIAILFLIAGHMY), 346 to 369 (WHAQLSLNLAMLGSLTIVVAHHMY), 385 to 411 (LSLFTHHMWIGGFLIVGAAAHAAIFMV), 433 to 455 (AIISHLNWVCIFLGFHSFGLYIH), and 531 to 549 (FLVHHIHAFTIHVTVLILL). The [4Fe-4S] cluster site is built by Cys573 and Cys582. Helical transmembrane passes span 589-610 (HVFLGLFWMYNAISVVIFHFSW) and 664-686 (LSAYGLFFLGAHFVWAFSLMFLF). His675 contacts chlorophyll a'. Positions 683 and 691 each coordinate chlorophyll a. Trp692 is a phylloquinone binding site. Residues 724-744 (TVGVTHYLLGGIATTWAFFLA) form a helical membrane-spanning segment.

It belongs to the PsaA/PsaB family. The PsaA/B heterodimer binds the P700 chlorophyll special pair and subsequent electron acceptors. PSI consists of a core antenna complex that captures photons, and an electron transfer chain that converts photonic excitation into a charge separation. The eukaryotic PSI reaction center is composed of at least 11 subunits. P700 is a chlorophyll a/chlorophyll a' dimer, A0 is one or more chlorophyll a, A1 is one or both phylloquinones and FX is a shared 4Fe-4S iron-sulfur center. serves as cofactor.

It is found in the plastid. The protein resides in the chloroplast thylakoid membrane. It catalyses the reaction reduced [plastocyanin] + hnu + oxidized [2Fe-2S]-[ferredoxin] = oxidized [plastocyanin] + reduced [2Fe-2S]-[ferredoxin]. In terms of biological role, psaA and PsaB bind P700, the primary electron donor of photosystem I (PSI), as well as the electron acceptors A0, A1 and FX. PSI is a plastocyanin-ferredoxin oxidoreductase, converting photonic excitation into a charge separation, which transfers an electron from the donor P700 chlorophyll pair to the spectroscopically characterized acceptors A0, A1, FX, FA and FB in turn. Oxidized P700 is reduced on the lumenal side of the thylakoid membrane by plastocyanin. The polypeptide is Photosystem I P700 chlorophyll a apoprotein A1 (Oenothera elata subsp. hookeri (Hooker's evening primrose)).